We begin with the raw amino-acid sequence, 359 residues long: UDP-N-acetylglucosamine--N-acetylmuramyl-(pentapeptide) pyrophosphoryl-undecaprenol N-acetylglucosamine transferase (359 aa).

Residues 15-17, asparagine 127, arginine 166, serine 191, isoleucine 245, 264-269, and glutamine 290 contribute to the UDP-N-acetyl-alpha-D-glucosamine site; these read TGG and ALTVSE.

It belongs to the glycosyltransferase 28 family. MurG subfamily.

The protein resides in the cell inner membrane. It carries out the reaction di-trans,octa-cis-undecaprenyl diphospho-N-acetyl-alpha-D-muramoyl-L-alanyl-D-glutamyl-meso-2,6-diaminopimeloyl-D-alanyl-D-alanine + UDP-N-acetyl-alpha-D-glucosamine = di-trans,octa-cis-undecaprenyl diphospho-[N-acetyl-alpha-D-glucosaminyl-(1-&gt;4)]-N-acetyl-alpha-D-muramoyl-L-alanyl-D-glutamyl-meso-2,6-diaminopimeloyl-D-alanyl-D-alanine + UDP + H(+). The protein operates within cell wall biogenesis; peptidoglycan biosynthesis. Its function is as follows. Cell wall formation. Catalyzes the transfer of a GlcNAc subunit on undecaprenyl-pyrophosphoryl-MurNAc-pentapeptide (lipid intermediate I) to form undecaprenyl-pyrophosphoryl-MurNAc-(pentapeptide)GlcNAc (lipid intermediate II). This chain is UDP-N-acetylglucosamine--N-acetylmuramyl-(pentapeptide) pyrophosphoryl-undecaprenol N-acetylglucosamine transferase, found in Pseudomonas putida (strain GB-1).